The following is a 378-amino-acid chain: E3 ubiquitin-protein ligase ATL9 (378 aa).

Residues 1-33 (MAILDTKSSRWIPHNLLFLLLLLLLQSVPYGFG) form the signal peptide. Residues 51–71 (VVVVITVLFLVIFFMVFGSIF) form a helical membrane-spanning segment. The RING-type; atypical zinc-finger motif lies at 135–177 (CAVCLCEFEDDETLRLMPPCCHVFHADCVDVWLSEHSTCPLCR). Disordered stretches follow at residues 187–211 (DDDDSTESYSGTDPGTISSSTDPER), 300–326 (ARSSRSGYRSGSVGSERSAFPYGRKSN), and 350–378 (FSGDAPKNLPTSIEAGERSFERLRPDERV). Residues 193 to 207 (ESYSGTDPGTISSST) are compositionally biased toward polar residues. Over residues 301 to 317 (RSSRSGYRSGSVGSERS) the composition is skewed to low complexity. Positions 364–378 (AGERSFERLRPDERV) are enriched in basic and acidic residues.

The protein belongs to the RING-type zinc finger family. ATL subfamily.

The protein localises to the membrane. It catalyses the reaction S-ubiquitinyl-[E2 ubiquitin-conjugating enzyme]-L-cysteine + [acceptor protein]-L-lysine = [E2 ubiquitin-conjugating enzyme]-L-cysteine + N(6)-ubiquitinyl-[acceptor protein]-L-lysine.. Its pathway is protein modification; protein ubiquitination. E3 ubiquitin-protein ligase able to catalyze polyubiquitination with ubiquitin-conjugating enzyme E2 UBC8 in vitro. May be involved in the early steps of the plant defense signaling pathway. The protein is E3 ubiquitin-protein ligase ATL9 (ATL9) of Arabidopsis thaliana (Mouse-ear cress).